The chain runs to 61 residues: Small ribosomal subunit protein uS14 (61 aa).

Zn(2+) is bound by residues Cys24, Cys27, Cys40, and Cys43.

This sequence belongs to the universal ribosomal protein uS14 family. Zinc-binding uS14 subfamily. As to quaternary structure, part of the 30S ribosomal subunit. Contacts proteins S3 and S10. It depends on Zn(2+) as a cofactor.

Its function is as follows. Binds 16S rRNA, required for the assembly of 30S particles and may also be responsible for determining the conformation of the 16S rRNA at the A site. The polypeptide is Small ribosomal subunit protein uS14 (Mycoplasmopsis pulmonis (strain UAB CTIP) (Mycoplasma pulmonis)).